Consider the following 59-residue polypeptide: Ferredoxin (59 aa).

In terms of domain architecture, 4Fe-4S ferredoxin-type spans 2 to 29; that stretch reads KVSVDKDACIGCGVCASICPDVFEMDDD. Residues Cys-10, Cys-13, and Cys-16 each contribute to the [4Fe-4S] cluster site. Cys-20 and Cys-43 are disulfide-bonded. Cys-51 contributes to the [4Fe-4S] cluster binding site.

The cofactor is [4Fe-4S] cluster. It depends on [3Fe-4S] cluster as a cofactor.

In terms of biological role, ferredoxins are iron-sulfur proteins that transfer electrons in a wide variety of metabolic reactions. This is Ferredoxin from Thermococcus litoralis.